Here is a 1872-residue protein sequence, read N- to C-terminus: E3 ubiquitin-protein ligase UBR2 (1872 aa).

The UBR-type zinc-finger motif lies at 96-172 (TACTRLCFPS…DAFKCKNELN (77 aa)). Lys-709 is covalently cross-linked (Glycyl lysine isopeptide (Lys-Gly) (interchain with G-Cter in ubiquitin)). The interaction with UBC2 stretch occupies residues 1134-1240 (RYLMETAPHV…SSNTINSCCD (107 aa)). The tract at residues 1203–1227 (NNSVDTSDISTPRTTSPSLSPTRIN) is disordered. A compositionally biased stretch (low complexity) spans 1212 to 1225 (STPRTTSPSLSPTR). Phosphoserine is present on residues Ser-1218 and Ser-1222. Residues 1241-1362 (DDCVFCKMPK…GLIYCPVCNS (122 aa)) form an RING-type; atypical zinc finger.

Belongs to the E3 ubiquitin-protein ligase UBR1-like family. In terms of assembly, interacts with MUB1, RPN4 and UBC2.

Its subcellular location is the cytoplasm. It catalyses the reaction S-ubiquitinyl-[E2 ubiquitin-conjugating enzyme]-L-cysteine + [acceptor protein]-L-lysine = [E2 ubiquitin-conjugating enzyme]-L-cysteine + N(6)-ubiquitinyl-[acceptor protein]-L-lysine.. Its pathway is protein modification; protein ubiquitination. Functionally, E3 ubiquitin-protein ligase which probably functions outside the N-end rule pathway, since it lacks the residues essential for the degradation of N-end rule substrates. Mediates RPN4 ubiquitination and subsequent degradation. The polypeptide is E3 ubiquitin-protein ligase UBR2 (UBR2) (Saccharomyces cerevisiae (strain ATCC 204508 / S288c) (Baker's yeast)).